The chain runs to 402 residues: Phosphoglycerate kinase (402 aa).

Substrate is bound by residues 21 to 23, R36, 59 to 62, R114, and R147; these read DLN and HLGR. ATP contacts are provided by residues K202, E329, and 355-358; that span reads GGDT.

The protein belongs to the phosphoglycerate kinase family. Monomer.

It is found in the cytoplasm. It catalyses the reaction (2R)-3-phosphoglycerate + ATP = (2R)-3-phospho-glyceroyl phosphate + ADP. Its pathway is carbohydrate degradation; glycolysis; pyruvate from D-glyceraldehyde 3-phosphate: step 2/5. This Psychrobacter sp. (strain PRwf-1) protein is Phosphoglycerate kinase.